Here is a 643-residue protein sequence, read N- to C-terminus: Protein tramtrack, beta isoform (643 aa).

The 66-residue stretch at 33–98 (TDVTLAVEGQ…MYRGEVSVDQ (66 aa)) folds into the BTB domain. 2 disordered regions span residues 118-148 (EVND…PQLQ) and 171-300 (ANAG…GLDT). K123 participates in a covalent cross-link: Glycyl lysine isopeptide (Lys-Gly) (interchain with G-Cter in ubiquitin). Positions 125-145 (SPAAAAAGAGATGSESTATTP) are enriched in low complexity. Residues 176–187 (TPTLPVQPSLLS) are compositionally biased toward polar residues. Residues 192-201 (PKRKRGRPRK) show a composition bias toward basic residues. A Glycyl lysine isopeptide (Lys-Gly) (interchain with G-Cter in ubiquitin) cross-link involves residue K201. A compositionally biased stretch (basic and acidic residues) spans 254–285 (HTDDLNESRDSLPSKRSKNSKDHRVVSHHEDN). Glycyl lysine isopeptide (Lys-Gly) (interchain with G-Cter in ubiquitin) cross-links involve residues K355, K397, K418, K457, K478, and K480. C2H2-type zinc fingers lie at residues 508–531 (YRCK…VTSH) and 538–561 (YPCP…KIIH). Residue K545 forms a Glycyl lysine isopeptide (Lys-Gly) (interchain with G-Cter in ubiquitin) linkage. The disordered stretch occupies residues 584-643 (GVSGASTPPPPDLSGQNSNQSLPATSNALSTSSSSSTSSSSGSLGPLTTSAPPAPAAAAQ). The segment covering 604–643 (SLPATSNALSTSSSSSTSSSSGSLGPLTTSAPPAPAAAAQ) has biased composition (low complexity).

In terms of assembly, can form homodimers. Interacts with Trl in vivo via the BTB domain. Interacts with phyl. Interacts with Usp47. Post-translationally, polyubiquitinated by sina. Polyubiquitin linkage is mainly through 'Lys-48', but linkage through 'Lys-63' also occurs. Deubiquitination by Usp47 leads to its stabilization.

The protein localises to the nucleus. In terms of biological role, binds to a number of sites in the transcriptional regulatory region of ftz. Isoform beta is required to repress inappropriate segmentation gene transcription and repress genes incompatible with development of photoreceptor cell fates. Probable repressor of the transcription of the segmentation genes ftz, eve, h, odd, run, and en. Inhibits Trl-dependent activation of eve. May bind to the region AGGGC/TGG. Degradation of ttk is directed by binding of sinah or sina, via the adapter molecule phyl which binds to the BTB domain of ttk. A second method of degradation exists that is phyl-independent, this is mediated by recognition of motifs in the C-terminus of ttk. In Drosophila melanogaster (Fruit fly), this protein is Protein tramtrack, beta isoform (ttk).